The chain runs to 224 residues: PKHD-type hydroxylase Sbal_3634 (224 aa).

The Fe2OG dioxygenase domain occupies 78 to 176 (QFYPPLFNRY…RTAAFMWLQS (99 aa)). Positions 96, 98, and 157 each coordinate Fe cation. Residue Arg-167 coordinates 2-oxoglutarate.

It depends on Fe(2+) as a cofactor. L-ascorbate serves as cofactor.

This chain is PKHD-type hydroxylase Sbal_3634, found in Shewanella baltica (strain OS155 / ATCC BAA-1091).